A 293-amino-acid polypeptide reads, in one-letter code: Small ribosomal subunit biogenesis GTPase RsgA (293 aa).

A CP-type G domain is found at 63-223 (KNELVRPPIA…VADTPGFSSL (161 aa)). GTP-binding positions include 112–115 (SKMD) and 166–174 (GQSGVGKSS). C247, C252, H254, and C260 together coordinate Zn(2+).

It belongs to the TRAFAC class YlqF/YawG GTPase family. RsgA subfamily. Monomer. Associates with 30S ribosomal subunit, binds 16S rRNA. Requires Zn(2+) as cofactor.

Its subcellular location is the cytoplasm. In terms of biological role, one of several proteins that assist in the late maturation steps of the functional core of the 30S ribosomal subunit. Helps release RbfA from mature subunits. May play a role in the assembly of ribosomal proteins into the subunit. Circularly permuted GTPase that catalyzes slow GTP hydrolysis, GTPase activity is stimulated by the 30S ribosomal subunit. The sequence is that of Small ribosomal subunit biogenesis GTPase RsgA from Bacillus cytotoxicus (strain DSM 22905 / CIP 110041 / 391-98 / NVH 391-98).